Reading from the N-terminus, the 203-residue chain is Small ribosomal subunit protein uS4 (203 aa).

The S4 RNA-binding domain occupies 93–156; sequence RRLDNVVYRL…MKVPAILEAV (64 aa).

It belongs to the universal ribosomal protein uS4 family. As to quaternary structure, part of the 30S ribosomal subunit. Contacts protein S5. The interaction surface between S4 and S5 is involved in control of translational fidelity.

In terms of biological role, one of the primary rRNA binding proteins, it binds directly to 16S rRNA where it nucleates assembly of the body of the 30S subunit. Its function is as follows. With S5 and S12 plays an important role in translational accuracy. This chain is Small ribosomal subunit protein uS4, found in Streptococcus pyogenes serotype M1.